Consider the following 149-residue polypeptide: Large ribosomal subunit protein uL13 (149 aa).

Belongs to the universal ribosomal protein uL13 family. In terms of assembly, part of the 50S ribosomal subunit.

This protein is one of the early assembly proteins of the 50S ribosomal subunit, although it is not seen to bind rRNA by itself. It is important during the early stages of 50S assembly. The polypeptide is Large ribosomal subunit protein uL13 (Bifidobacterium longum (strain DJO10A)).